The chain runs to 210 residues: 7-carboxy-7-deazaguanine synthase (210 aa).

Substrate-binding positions include 12 to 14 (LQG) and R27. One can recognise a Radical SAM core domain in the interval 18-210 (QAGRAAVFCR…LQTHKYIGIP (193 aa)). Residues C31, C46, and C49 each coordinate [4Fe-4S] cluster. T51 provides a ligand contact to Mg(2+). Residue T90 participates in substrate binding. Residues G92, 133 to 135 (SPK), and 173 to 176 (QPMD) each bind S-adenosyl-L-methionine. P210 contributes to the substrate binding site.

The protein belongs to the radical SAM superfamily. 7-carboxy-7-deazaguanine synthase family. Homodimer. It depends on [4Fe-4S] cluster as a cofactor. S-adenosyl-L-methionine is required as a cofactor. The cofactor is Mg(2+).

It catalyses the reaction 6-carboxy-5,6,7,8-tetrahydropterin + H(+) = 7-carboxy-7-deazaguanine + NH4(+). The protein operates within purine metabolism; 7-cyano-7-deazaguanine biosynthesis. Catalyzes the complex heterocyclic radical-mediated conversion of 6-carboxy-5,6,7,8-tetrahydropterin (CPH4) to 7-carboxy-7-deazaguanine (CDG), a step common to the biosynthetic pathways of all 7-deazapurine-containing compounds. The protein is 7-carboxy-7-deazaguanine synthase of Bordetella pertussis (strain Tohama I / ATCC BAA-589 / NCTC 13251).